A 164-amino-acid chain; its full sequence is NADH-quinone oxidoreductase subunit C (164 aa).

Belongs to the complex I 30 kDa subunit family. As to quaternary structure, NDH-1 is composed of 14 different subunits. Subunits NuoB, C, D, E, F, and G constitute the peripheral sector of the complex.

It is found in the cell inner membrane. It catalyses the reaction a quinone + NADH + 5 H(+)(in) = a quinol + NAD(+) + 4 H(+)(out). NDH-1 shuttles electrons from NADH, via FMN and iron-sulfur (Fe-S) centers, to quinones in the respiratory chain. The immediate electron acceptor for the enzyme in this species is believed to be ubiquinone. Couples the redox reaction to proton translocation (for every two electrons transferred, four hydrogen ions are translocated across the cytoplasmic membrane), and thus conserves the redox energy in a proton gradient. The protein is NADH-quinone oxidoreductase subunit C of Geotalea uraniireducens (strain Rf4) (Geobacter uraniireducens).